The primary structure comprises 300 residues: Tyrosine recombinase XerD (300 aa).

Residues 5 to 90 (YQCDPLIDAF…SLRRFYNYLL (86 aa)) form the Core-binding (CB) domain. Positions 111-294 (HLPDSLSESQ…ARARLQELHQ (184 aa)) constitute a Tyr recombinase domain. Active-site residues include R151, K175, H246, R249, and H272. Y281 functions as the O-(3'-phospho-DNA)-tyrosine intermediate in the catalytic mechanism.

This sequence belongs to the 'phage' integrase family. XerD subfamily. Forms a cyclic heterotetrameric complex composed of two molecules of XerC and two molecules of XerD.

The protein resides in the cytoplasm. Its function is as follows. Site-specific tyrosine recombinase, which acts by catalyzing the cutting and rejoining of the recombining DNA molecules. The XerC-XerD complex is essential to convert dimers of the bacterial chromosome into monomers to permit their segregation at cell division. It also contributes to the segregational stability of plasmids. The protein is Tyrosine recombinase XerD of Shewanella oneidensis (strain ATCC 700550 / JCM 31522 / CIP 106686 / LMG 19005 / NCIMB 14063 / MR-1).